The chain runs to 481 residues: OTU domain-containing protein 1 (481 aa).

2 disordered regions span residues 18-60 (PTAA…AAAE) and 202-282 (LAAA…IVSR). Over residues 38 to 58 (PPGAAGAAPEPETGECQPAAA) the composition is skewed to low complexity. Residues 225–257 (GEEHLAERGPRGWERGGDRCDAPGGDAARRPDP) show a composition bias toward basic and acidic residues. Residues 261 to 281 (APPAGSIEAAPSSAAEPVIVS) are compositionally biased toward low complexity. The 130-residue stretch at 309-438 (KYRFHIIPDG…NGHYDAVFDH (130 aa)) folds into the OTU domain. Positions 314-320 (IIPDGNC) are cys-loop. Asp-317 is an active-site residue. Cys-320 acts as the Nucleophile in catalysis. Positions 369 to 379 (AAQDGAWAGYP) are his-loop. Residues 426–431 (WLSNGH) form a variable-loop region. The active site involves His-431. A UIM domain is found at 457-476 (KRDEELAKSMAISLSKMYIE).

It catalyses the reaction Thiol-dependent hydrolysis of ester, thioester, amide, peptide and isopeptide bonds formed by the C-terminal Gly of ubiquitin (a 76-residue protein attached to proteins as an intracellular targeting signal).. Functionally, deubiquitinating enzyme that specifically hydrolyzes 'Lys-63'-linked polyubiquitin to monoubiquitin. Required for the stability and translation of a subset mRNAs with a high abundance of rare codons by mediating deubiquitination of 40S ribosomal protein RPS10/eS10, thereby antagonizing ZNF598-mediated 40S ubiquitination. The abundance of rare codons in mRNAs can limit the translation rate and can lead to ribosome collisions that trigger activation of ribosome quality control (RQC) pathway by ZNF598. OTUD1-mediated deubiquitination prevents activation of the RQC and subsequent dissociation of ribosomes and stimulates formation of polysomes and translation. The chain is OTU domain-containing protein 1 from Homo sapiens (Human).